The chain runs to 249 residues: Triosephosphate isomerase (249 aa).

Residue 9–11 (NWK) participates in substrate binding. His-94 (electrophile) is an active-site residue. The Proton acceptor role is filled by Glu-166. Substrate contacts are provided by residues Gly-172, Ser-211, and 232 to 233 (GG).

The protein belongs to the triosephosphate isomerase family. Homodimer.

It is found in the cytoplasm. The enzyme catalyses D-glyceraldehyde 3-phosphate = dihydroxyacetone phosphate. The protein operates within carbohydrate biosynthesis; gluconeogenesis. It participates in carbohydrate degradation; glycolysis; D-glyceraldehyde 3-phosphate from glycerone phosphate: step 1/1. Its function is as follows. Involved in the gluconeogenesis. Catalyzes stereospecifically the conversion of dihydroxyacetone phosphate (DHAP) to D-glyceraldehyde-3-phosphate (G3P). The sequence is that of Triosephosphate isomerase from Chromohalobacter salexigens (strain ATCC BAA-138 / DSM 3043 / CIP 106854 / NCIMB 13768 / 1H11).